Here is a 250-residue protein sequence, read N- to C-terminus: 1-(5-phosphoribosyl)-5-[(5-phosphoribosylamino)methylideneamino] imidazole-4-carboxamide isomerase (250 aa).

The active-site Proton acceptor is the Asp8. The Proton donor role is filled by Asp131.

It belongs to the HisA/HisF family.

The protein resides in the cytoplasm. The enzyme catalyses 1-(5-phospho-beta-D-ribosyl)-5-[(5-phospho-beta-D-ribosylamino)methylideneamino]imidazole-4-carboxamide = 5-[(5-phospho-1-deoxy-D-ribulos-1-ylimino)methylamino]-1-(5-phospho-beta-D-ribosyl)imidazole-4-carboxamide. The protein operates within amino-acid biosynthesis; L-histidine biosynthesis; L-histidine from 5-phospho-alpha-D-ribose 1-diphosphate: step 4/9. This Paraburkholderia xenovorans (strain LB400) protein is 1-(5-phosphoribosyl)-5-[(5-phosphoribosylamino)methylideneamino] imidazole-4-carboxamide isomerase.